Here is a 993-residue protein sequence, read N- to C-terminus: Muscular LMNA-interacting protein (993 aa).

The interval 1–51 (MLSEQGLLSDCGNNYFQMTSCILSGSIQTTPQVSAGGSEAKPLIFTFVPTV) is interaction with LMNA. A disordered region spans residues 71 to 90 (PEESSDKSPETVNRSKSNDY). Polar residues predominate over residues 80 to 90 (ETVNRSKSNDY). S146 carries the phosphoserine modification. Disordered stretches follow at residues 152-171 (AASR…AAVR), 186-225 (VRPK…TSEQ), 231-250 (PAFS…PVNL), 300-322 (PHST…KPGL), 334-358 (SHVL…SLKS), 443-481 (SPAS…QGEL), 500-582 (TPLS…IHTY), 677-711 (SALH…TPSL), and 811-864 (LSMH…SQLT). The segment at 161 to 837 (PPGGIGTAAV…GSDTVKTPTT (677 aa)) is required for interaction with ISL1. Residues 212-225 (KHGQLTSSPTTSEQ) are compositionally biased toward polar residues. Over residues 300-315 (PHSTQLSGSNLPSSTA) the composition is skewed to polar residues. Residues 343–358 (PRTSSSPPSSSASLKS) show a composition bias toward low complexity. Polar residues predominate over residues 500–532 (TPLSQAPSLSPTKQASSSLASMNVERTPSPTLK). Positions 533 to 563 (SNTMLSLLQTSTSSSVGLPPVPPSSSLSSLK) are enriched in low complexity. Basic and acidic residues predominate over residues 564 to 574 (SKQDGDLRGPE). Polar residues predominate over residues 695 to 711 (SESTTPNHRSPVSTPSL). The span at 811-822 (LSMHSSDSPSRS) shows a compositional bias: low complexity. S818 carries the post-translational modification Phosphoserine. Residues 849–864 (ANLSSPSSTVSESQLT) are compositionally biased toward polar residues.

As to quaternary structure, directly interacts with LMNA. Interacts with ISL1 (via N-terminal domain); the interaction represses ISL1 transactivator activity. Interactions of ISL1 with MLIP1 and GCN5/KAT2A may be mutually exclusive. In terms of tissue distribution, predominantly expressed in the heart and skeletal muscle. Also detected in liver. As to expression, expressed in skeletal muscle.

It is found in the nucleus. The protein resides in the nucleus envelope. The protein localises to the PML body. Its subcellular location is the cytoplasm. It localises to the cytosol. It is found in the cell membrane. The protein resides in the sarcolemma. In terms of biological role, required for myoblast differentiation into myotubes, possibly acting as a transcriptional regulator of the myogenic program. Required for cardiac adaptation to stress through integrated regulation of the AKT/mTOR pathways and FOXO1. Regulates cardiac homeostasis and plays a role in the protection against cardiac hypertrophy. Binds chromatin. May act as a transcriptional cofactor for ISL1, repressing its transcriptional activity. May also repress MYOCD transcriptional activity. This Homo sapiens (Human) protein is Muscular LMNA-interacting protein.